Reading from the N-terminus, the 385-residue chain is Homoserine O-succinyltransferase (385 aa).

An AB hydrolase-1 domain is found at Asn45–Asp355. Ser151 acts as the Nucleophile in catalysis. Arg221 contributes to the substrate binding site. Active-site residues include Asp316 and His349. Asp350 provides a ligand contact to substrate.

It belongs to the AB hydrolase superfamily. MetX family. In terms of assembly, homodimer.

The protein resides in the cytoplasm. The enzyme catalyses L-homoserine + succinyl-CoA = O-succinyl-L-homoserine + CoA. Its pathway is amino-acid biosynthesis; L-methionine biosynthesis via de novo pathway; O-succinyl-L-homoserine from L-homoserine: step 1/1. Functionally, transfers a succinyl group from succinyl-CoA to L-homoserine, forming succinyl-L-homoserine. In Janthinobacterium sp. (strain Marseille) (Minibacterium massiliensis), this protein is Homoserine O-succinyltransferase.